A 265-amino-acid polypeptide reads, in one-letter code: Apolipoprotein A-I (265 aa).

Positions 1 to 18 (MKALVLTLAVLFFTGSQA) are cleaved as a signal peptide. Tandem repeats lie at residues 67–88 (LKLL…EQLG) and 89–110 (PVTQ…QEMN). The 10 X approximate tandem repeats stretch occupies residues 67-265 (LKLLDNWDSL…DEASKKLNAQ (199 aa)). Position 109 is a methionine sulfoxide (Met-109). The stretch at 111-121 (KDLEEVKQKVQ) is one 3; half-length repeat. 5 tandem repeats follow at residues 122 to 142 (PYLD…RQKV), 144 to 165 (PLGE…DKLT), 166 to 187 (PLAE…QQLA), 188 to 209 (PYSD…EGGG), and 210 to 230 (SLAE…EKAK). Residues 231-241 (PALEDLRQGLL) form a 9; half-length repeat. Copy 10 of the repeat occupies 242-265 (PVLESLKVSILAAIDEASKKLNAQ).

It belongs to the apolipoprotein A1/A4/E family. Homodimer. Interacts with APOA1BP and CLU. Component of a sperm activating protein complex (SPAP), consisting of APOA1, an immunoglobulin heavy chain, an immunoglobulin light chain and albumin. Interacts with NDRG1. Interacts with SCGB3A2. Interacts with NAXE and YJEFN3. Glycosylated. In terms of processing, palmitoylated. Post-translationally, phosphorylation sites are present in the extracellular medium. Major protein of plasma HDL, also found in chylomicrons.

It is found in the secreted. Functionally, participates in the reverse transport of cholesterol from tissues to the liver for excretion by promoting cholesterol efflux from tissues and by acting as a cofactor for the lecithin cholesterol acyltransferase (LCAT). As part of the SPAP complex, activates spermatozoa motility. This is Apolipoprotein A-I (APOA1) from Physeter macrocephalus (Sperm whale).